Here is a 178-residue protein sequence, read N- to C-terminus: Caveolin-1 (178 aa).

Ser-2 is modified (N-acetylserine). Ser-2 carries the post-translational modification Phosphoserine. The interval 2–94 is required for homooligomerization; that stretch reads SGGKYVDSEG…WKASFTTFTV (93 aa). Residues 2–104 are Cytoplasmic-facing; the sequence is SGGKYVDSEG…TKYWFYRLLS (103 aa). N6-acetyllysine; alternate is present on Lys-5. Lys-5 participates in a covalent cross-link: Glycyl lysine isopeptide (Lys-Gly) (interchain with G-Cter in ubiquitin); alternate. Phosphotyrosine is present on Tyr-6. The residue at position 9 (Ser-9) is a Phosphoserine. Tyr-14 carries the post-translational modification Phosphotyrosine; by ABL1. Tyr-25 carries the post-translational modification Phosphotyrosine. Residues Lys-26, Lys-30, Lys-39, Lys-47, and Lys-57 each participate in a glycyl lysine isopeptide (Lys-Gly) (interchain with G-Cter in ubiquitin) cross-link. Positions 82-94 are interaction with CAVIN3; sequence DGIWKASFTTFTV. The segment at residues 105-125 is an intramembrane region (helical); it reads SLVGIPVALIWGIYFAILSFL. Residues 126–178 lie on the Cytoplasmic side of the membrane; that stretch reads YIWAVVPCIKSFLIKIQCISRIYSICIHTFCDPLYEAIGKIFSNIRISMQKEI. Positions 131 to 142 are interacts with SPRY1, SPRY2, SPRY3 and SPRY4; it reads VPCIKSFLIKIQ. S-palmitoyl cysteine attachment occurs at residues Cys-133, Cys-143, and Cys-156. The segment at 149–160 is interacts with SPRY1, SPRY2, and SPRY4; that stretch reads SICIHTFCDPLY. Positions 167 to 178 are interacts with SPRY1, SPRY2, SPRY3 and SPRY4; the sequence is FSNIRISMQKEI.

This sequence belongs to the caveolin family. In terms of assembly, homooligomer. Interacts with GLIPR2. Interacts with NOSTRIN. Interacts with SNAP25 and STX1A. Interacts (via the N-terminus) with DPP4; the interaction is direct. Interacts with CTNNB1, CDH1 and JUP. Interacts with PACSIN2; this interaction induces membrane tubulation. Interacts with SLC7A9. Interacts with BMX and BTK. Interacts with TGFBR1. Interacts with CAVIN3 (via leucine-zipper domain) in a cholesterol-sensitive manner. Interacts with CAVIN1. Interacts with EHD2 in a cholesterol-dependent manner. Forms a ternary complex with UBXN6 and VCP; mediates CAV1 targeting to lysosomes for degradation. Interacts with ABCG1; this interaction regulates ABCG1-mediated cholesterol efflux. Interacts with NEU3; this interaction enhances NEU3 sialidase activity within caveola. Interacts (via C-terminus) with SPRY1, SPRY2 (via C-terminus), SPRY3, and SPRY4. Interacts with IGFBP5; this interaction allows trafficking of IGFBP5 from the plasma membrane to the nucleus. Phosphorylated at Tyr-14 by ABL1 in response to oxidative stress. In terms of processing, ubiquitinated. Undergo monoubiquitination and multi- and/or polyubiquitination. Monoubiquitination of N-terminal lysines promotes integration in a ternary complex with UBXN6 and VCP which promotes oligomeric CAV1 targeting to lysosomes for degradation. Ubiquitinated by ZNRF1; leading to degradation and modulation of the TLR4-mediated immune response.

Its subcellular location is the golgi apparatus membrane. It localises to the cell membrane. The protein resides in the membrane. It is found in the caveola. The protein localises to the membrane raft. May act as a scaffolding protein within caveolar membranes. Forms a stable heterooligomeric complex with CAV2 that targets to lipid rafts and drives caveolae formation. Mediates the recruitment of CAVIN proteins (CAVIN1/2/3/4) to the caveolae. Interacts directly with G-protein alpha subunits and can functionally regulate their activity. Involved in the costimulatory signal essential for T-cell receptor (TCR)-mediated T-cell activation. Its binding to DPP4 induces T-cell proliferation and NF-kappa-B activation in a T-cell receptor/CD3-dependent manner. Recruits CTNNB1 to caveolar membranes and may regulate CTNNB1-mediated signaling through the Wnt pathway. Negatively regulates TGFB1-mediated activation of SMAD2/3 by mediating the internalization of TGFBR1 from membrane rafts leading to its subsequent degradation. Binds 20(S)-hydroxycholesterol (20(S)-OHC). The polypeptide is Caveolin-1 (CAV1) (Atelerix albiventris (Middle-African hedgehog)).